The sequence spans 1512 residues: Sterol 3-beta-glucosyltransferase (1512 aa).

Disordered stretches follow at residues 22-50 (FSGSPNVSGDEGTDADNENPEHRTTYHSL) and 150-222 (DEHT…DTDV). Residues 156 to 169 (SEEEDSADKEEESI) show a composition bias toward acidic residues. Residues 190–222 (TTATLITTQITRTKTATTATPTPTPTSSVDTDV) are compositionally biased toward low complexity. Residues 296–331 (LQRVFDLSDEDTFCGNYSAWLIKDVLLQGHVYLTKD) enclose the GRAM 1 domain. A PH domain is found at 359–520 (SIVYSGNLGL…WCNNITKLIF (162 aa)). Residues 816–880 (RNFQSHFSTN…TDIEEVRASR (65 aa)) enclose the GRAM 2 domain. Residues Ser1024, Arg1025, Asp1027, Asn1299, Ile1328, His1330, His1343, Ser1346, Gly1347, Thr1348, Asp1367, and Gln1368 each coordinate UDP-alpha-D-glucose. The tract at residues 1450–1512 (YKRHHPVPSG…NNSPSQNSSN (63 aa)) is disordered. A compositionally biased stretch (acidic residues) spans 1467–1493 (TDSDDYDDDEDDDESDKDDEEEEEENS). Positions 1501–1512 (GVNNSPSQNSSN) are enriched in polar residues.

It belongs to the glycosyltransferase 28 family.

Its subcellular location is the cytoplasm. The protein localises to the membrane. It catalyses the reaction a sterol + UDP-alpha-D-glucose = a sterol 3-beta-D-glucoside + UDP + H(+). It carries out the reaction ergosterol + UDP-alpha-D-glucose = ergosteryl 3-beta-D-glucoside + UDP + H(+). Functionally, sterol glycosyltransferase responsible for the glycosylation of ergosterol to form ergosterol-glucoside. The polypeptide is Sterol 3-beta-glucosyltransferase (Candida albicans (strain SC5314 / ATCC MYA-2876) (Yeast)).